Consider the following 468-residue polypeptide: 6-phosphogluconate dehydrogenase, NAD(+)-dependent, decarboxylating (468 aa).

Residues 9-14, 32-34, 73-75, and asparagine 101 each bind NAD(+); these read GLGVMG, NYT, and VTA. Substrate contacts are provided by residues asparagine 101 and 127-129; that span reads SGG. Residue lysine 181 is the Proton acceptor of the active site. 184–185 is a binding site for substrate; it reads HN. Catalysis depends on glutamate 188, which acts as the Proton donor. Substrate contacts are provided by tyrosine 189, lysine 259, arginine 286, arginine 445, and histidine 451.

Belongs to the 6-phosphogluconate dehydrogenase family. Homodimer.

The enzyme catalyses 6-phospho-D-gluconate + NAD(+) = D-ribulose 5-phosphate + CO2 + NADH. Catalyzes the oxidative decarboxylation of 6-phosphogluconate to ribulose 5-phosphate and CO(2), with concomitant reduction of NAD to NADH. Does not contribute to oxidative pentose phosphate (PP) pathway fluxes during growth on glucose. The functional role of GntZ remains obscure. In Bacillus subtilis (strain 168), this protein is 6-phosphogluconate dehydrogenase, NAD(+)-dependent, decarboxylating (gntZ).